Consider the following 404-residue polypeptide: NADH-quinone oxidoreductase subunit D 1 (404 aa).

The protein belongs to the complex I 49 kDa subunit family. As to quaternary structure, NDH-1 is composed of 14 different subunits. Subunits NuoB, C, D, E, F, and G constitute the peripheral sector of the complex.

Its subcellular location is the cell membrane. It carries out the reaction a quinone + NADH + 5 H(+)(in) = a quinol + NAD(+) + 4 H(+)(out). NDH-1 shuttles electrons from NADH, via FMN and iron-sulfur (Fe-S) centers, to quinones in the respiratory chain. The immediate electron acceptor for the enzyme in this species is believed to be a menaquinone. Couples the redox reaction to proton translocation (for every two electrons transferred, four hydrogen ions are translocated across the cytoplasmic membrane), and thus conserves the redox energy in a proton gradient. The polypeptide is NADH-quinone oxidoreductase subunit D 1 (Symbiobacterium thermophilum (strain DSM 24528 / JCM 14929 / IAM 14863 / T)).